The following is a 447-amino-acid chain: MSTMTPAEIVSELDKHIIGQDKAKKAVAVALRNRWRRQQVAEPLRQEITPKNILMIGPTGVGKTEIARRLAKLADAPFIKIEATKFTEVGYVGRDVDSIVRDLIEISVKQTRETEMRKVRSKATDLAEDRILDVLLPQPRAVGFGASVEHANDDNNATRQTFRKRLREGQLDDKEIELDIEQPTVGMDIMAPPGMEEMTEQIRSMFSNLGSGKKQRRKVKIKEALKLLTDEEAAKMLNDEEVKTKAVQNVEQNGIVFLDEIDKITSRNHEGGGGEVSRQGVQRDLLPLVEGTTINTKYGMVKTDHILFIASGAFHLAKPSDLIPELQGRFPIRVELDSLSVKDFEAILVATDASLVKQYQALLATEDVALEFADDGIRRLAEIAYAVNEKTENIGARRLYTVIEKLLEEVSFAAGNHAGQSVTIDAAYVDRALGEVSKDEDLSRYVL.

ATP-binding positions include Ile-18, 60 to 65, Asp-259, Glu-325, and Arg-397; that span reads GVGKTE.

Belongs to the ClpX chaperone family. HslU subfamily. As to quaternary structure, a double ring-shaped homohexamer of HslV is capped on each side by a ring-shaped HslU homohexamer. The assembly of the HslU/HslV complex is dependent on binding of ATP.

The protein resides in the cytoplasm. Functionally, ATPase subunit of a proteasome-like degradation complex; this subunit has chaperone activity. The binding of ATP and its subsequent hydrolysis by HslU are essential for unfolding of protein substrates subsequently hydrolyzed by HslV. HslU recognizes the N-terminal part of its protein substrates and unfolds these before they are guided to HslV for hydrolysis. In Burkholderia thailandensis (strain ATCC 700388 / DSM 13276 / CCUG 48851 / CIP 106301 / E264), this protein is ATP-dependent protease ATPase subunit HslU.